The chain runs to 337 residues: MPTIHRPRMGSLAYSPRKRAKSPVPKYHAWPAYQGEPALQGFAGYKVGMTHVIMVDDHAHSPNEGKDIMVPVTVIEVPDMRVAAIRVYRHDTYGNHVLTEVWADSFDKELSRRLNLSKNYKREEAEKKIREALEADKIVDVVALTYTRPSVLTGVPKKVPDLMETRIDGGSMTERFEYGLSMLGKDFDIRSLFKVGQYTDVTAITKGKGTQGPVKRWGVHLRKRKHSRGKKERHVGTLGPWTPHHVRWQVPMMGQMGYHQRTEFNKRLLKIGEDGAEITPEGGFINYGEVRARYVLIKGSVPGPSKRLVRIRHAMRLGEHKIREPTIGFISLESKQG.

It belongs to the universal ribosomal protein uL3 family. Part of the 50S ribosomal subunit. Forms a cluster with proteins L14 and L24e.

In terms of biological role, one of the primary rRNA binding proteins, it binds directly near the 3'-end of the 23S rRNA, where it nucleates assembly of the 50S subunit. In Methanospirillum hungatei JF-1 (strain ATCC 27890 / DSM 864 / NBRC 100397 / JF-1), this protein is Large ribosomal subunit protein uL3.